A 461-amino-acid chain; its full sequence is Cysteine--tRNA ligase (461 aa).

Zn(2+) is bound at residue cysteine 28. The 'HIGH' region signature appears at 30–40 (ITIYDLCHIGH). Zn(2+) is bound by residues cysteine 209, histidine 234, and glutamate 238. The 'KMSKS' region signature appears at 266 to 270 (KMSKS). Lysine 269 contributes to the ATP binding site.

It belongs to the class-I aminoacyl-tRNA synthetase family. As to quaternary structure, monomer. Requires Zn(2+) as cofactor.

The protein resides in the cytoplasm. It carries out the reaction tRNA(Cys) + L-cysteine + ATP = L-cysteinyl-tRNA(Cys) + AMP + diphosphate. In Photorhabdus laumondii subsp. laumondii (strain DSM 15139 / CIP 105565 / TT01) (Photorhabdus luminescens subsp. laumondii), this protein is Cysteine--tRNA ligase.